We begin with the raw amino-acid sequence, 321 residues long: Lipoyl synthase (321 aa).

Cys68, Cys73, Cys79, Cys94, Cys98, Cys101, and Ser308 together coordinate [4Fe-4S] cluster. A Radical SAM core domain is found at 80-297 (FNHGTATFMI…KEIALELGFT (218 aa)).

It belongs to the radical SAM superfamily. Lipoyl synthase family. It depends on [4Fe-4S] cluster as a cofactor.

The protein resides in the cytoplasm. The enzyme catalyses [[Fe-S] cluster scaffold protein carrying a second [4Fe-4S](2+) cluster] + N(6)-octanoyl-L-lysyl-[protein] + 2 oxidized [2Fe-2S]-[ferredoxin] + 2 S-adenosyl-L-methionine + 4 H(+) = [[Fe-S] cluster scaffold protein] + N(6)-[(R)-dihydrolipoyl]-L-lysyl-[protein] + 4 Fe(3+) + 2 hydrogen sulfide + 2 5'-deoxyadenosine + 2 L-methionine + 2 reduced [2Fe-2S]-[ferredoxin]. Its pathway is protein modification; protein lipoylation via endogenous pathway; protein N(6)-(lipoyl)lysine from octanoyl-[acyl-carrier-protein]: step 2/2. Its function is as follows. Catalyzes the radical-mediated insertion of two sulfur atoms into the C-6 and C-8 positions of the octanoyl moiety bound to the lipoyl domains of lipoate-dependent enzymes, thereby converting the octanoylated domains into lipoylated derivatives. This chain is Lipoyl synthase, found in Aliivibrio fischeri (strain MJ11) (Vibrio fischeri).